A 238-amino-acid chain; its full sequence is Ubiquinone biosynthesis O-methyltransferase (238 aa).

S-adenosyl-L-methionine contacts are provided by arginine 39, glycine 58, aspartate 79, and methionine 123.

This sequence belongs to the methyltransferase superfamily. UbiG/COQ3 family.

It catalyses the reaction a 3-demethylubiquinol + S-adenosyl-L-methionine = a ubiquinol + S-adenosyl-L-homocysteine + H(+). The enzyme catalyses a 3-(all-trans-polyprenyl)benzene-1,2-diol + S-adenosyl-L-methionine = a 2-methoxy-6-(all-trans-polyprenyl)phenol + S-adenosyl-L-homocysteine + H(+). The protein operates within cofactor biosynthesis; ubiquinone biosynthesis. Its function is as follows. O-methyltransferase that catalyzes the 2 O-methylation steps in the ubiquinone biosynthetic pathway. The protein is Ubiquinone biosynthesis O-methyltransferase of Hahella chejuensis (strain KCTC 2396).